Reading from the N-terminus, the 772-residue chain is Polyribonucleotide nucleotidyltransferase (772 aa).

Residues Asp-486 and Asp-492 each coordinate Mg(2+). A KH domain is found at 553–612; it reads PRIETLQIDKSKIRDVIGTGGKVIREIVATTGAKVDIDDEGLIKISSSDLTQIEAAKNWI. Positions 622 to 690 constitute an S1 motif domain; that stretch reads GKIYKGKVVN…QRGKVRLSMR (69 aa). The disordered stretch occupies residues 695 to 772; it reads ETGAELEDTR…HMPAFLKSDD (78 aa). The segment covering 701-760 has biased composition (basic and acidic residues); the sequence is EDTRPPREPREPRGDRGDRGDRGDRRGPRGDRGPRREGGDRGPRREGGDRPRRDRDDGPA.

The protein belongs to the polyribonucleotide nucleotidyltransferase family. Requires Mg(2+) as cofactor.

It is found in the cytoplasm. It carries out the reaction RNA(n+1) + phosphate = RNA(n) + a ribonucleoside 5'-diphosphate. Functionally, involved in mRNA degradation. Catalyzes the phosphorolysis of single-stranded polyribonucleotides processively in the 3'- to 5'-direction. The polypeptide is Polyribonucleotide nucleotidyltransferase (Novosphingobium aromaticivorans (strain ATCC 700278 / DSM 12444 / CCUG 56034 / CIP 105152 / NBRC 16084 / F199)).